The sequence spans 30 residues: Cyclotide hyen-F (30 aa).

The segment at residues 1 to 30 is a cross-link (cyclopeptide (Gly-Asn)); that stretch reads GLPCGESCVYIPCISTVLGCSCSNKVCYRN. Cystine bridges form between cysteine 4-cysteine 20, cysteine 8-cysteine 22, and cysteine 13-cysteine 27.

Post-translationally, this is a cyclic peptide. As to expression, detected in seeds (at protein level).

In terms of biological role, probably participates in a plant defense mechanism. The sequence is that of Cyclotide hyen-F from Pigea enneasperma (Spade flower).